Reading from the N-terminus, the 281-residue chain is UPF0500 protein C1orf216 homolog (281 aa).

Polar residues predominate over residues 1–12 (MFTIQKPDTVSH). The disordered stretch occupies residues 1–197 (MFTIQKPDTV…SSSDSDSISV (197 aa)). The segment covering 45-74 (TYDKNENWSQDKKGGEEGENKSKSEDEHSS) has biased composition (basic and acidic residues). 3 stretches are compositionally biased toward low complexity: residues 92 to 102 (STGSEGISLSS), 147 to 161 (SSSLSIDSPDSVSAS), and 169 to 178 (PAPTTTPQEN). The segment covering 179–190 (PETEDSDVESSS) has biased composition (acidic residues). Residues 198 to 257 (TLSEAFQSLQDKEKLKEREKEKHHAQLTMYRRLALLRWIRALQQKVRDQQNRLQESFDTI) are a coiled coil.

Belongs to the UPF0500 family.

This chain is UPF0500 protein C1orf216 homolog, found in Xenopus laevis (African clawed frog).